We begin with the raw amino-acid sequence, 535 residues long: High-affinity fructose transporter ght6 (535 aa).

At 1 to 9 the chain is on the cytoplasmic side; it reads MAKILTIVM. A helical membrane pass occupies residues 10-30; the sequence is LVFVSMAGWMFGADTGSIGGI. At 31–58 the chain is on the extracellular side; it reads TNMRDFQSRYADRYDPVTDTYSYSSARQ. The helical transmembrane segment at 59–79 threads the bilayer; the sequence is GLLVGMVNTGTTVGCLLSSPL. Over 80 to 87 the chain is Cytoplasmic; the sequence is GDRFGKRK. The helical transmembrane segment at 88–108 threads the bilayer; that stretch reads CIMGWTLVYITGVIVQLTTIP. The Extracellular portion of the chain corresponds to 109 to 112; that stretch reads SWVQ. The chain crosses the membrane as a helical span at residues 113 to 133; sequence MMVAKIWTGLGIGALSVIAPG. Residues 134 to 144 are Cytoplasmic-facing; that stretch reads YQSESSPPHIR. A helical transmembrane segment spans residues 145–165; the sequence is GAIVTTYQLFITLGIFIAACI. Over 166-181 the chain is Extracellular; sequence NMGTHKYTTHPEAQWR. The chain crosses the membrane as a helical span at residues 182–202; that stretch reads VPIGINLLWGILMFFGMLFLP. Over 203–268 the chain is Cytoplasmic; the sequence is ESPRYLAVKG…IFSNEIRYRT (66 aa). A helical membrane pass occupies residues 269 to 287; sequence LLGMGVMAFQQLTGNNYFF. Over 288–303 the chain is Extracellular; sequence YYGTQVFRGTGLNSPF. A helical membrane pass occupies residues 304–324; it reads LAALILDAVNFGCTFGAIFVL. At 325–330 the chain is on the cytoplasmic side; it reads EYFGRR. Residues 331–351 traverse the membrane as a helical segment; sequence GPLIVGGVWQSICFFIYASVG. The Extracellular portion of the chain corresponds to 352 to 365; sequence DRALTRPNGTSNHR. N-linked (GlcNAc...) asparagine glycosylation occurs at N359. Residues 366–386 form a helical membrane-spanning segment; it reads AGAVMIVFSCLFIFSFAQTWA. The Cytoplasmic segment spans residues 387–406; sequence PAAYVIVGESYPIRYRSKCA. Residues 407–427 form a helical membrane-spanning segment; that stretch reads AVATASNWFWNFMISFFTPFI. The Extracellular segment spans residues 428-434; that stretch reads SNSIGFK. A helical membrane pass occupies residues 435 to 455; the sequence is YGYVFAACNLCAAIIIFLFAK. Topologically, residues 456–535 are cytoplasmic; it reads ETKGLTLEEI…PQQVTNPVGL (80 aa). Residues 484–508 show a composition bias toward basic and acidic residues; the sequence is DREDIKQSDSEKERGPTSKLHEYVE. The disordered stretch occupies residues 484-535; that stretch reads DREDIKQSDSEKERGPTSKLHEYVEHAPNSYASTHSTESENYPQQVTNPVGL. Over residues 513–535 the composition is skewed to polar residues; the sequence is SYASTHSTESENYPQQVTNPVGL.

This sequence belongs to the major facilitator superfamily. Sugar transporter (TC 2.A.1.1) family.

The protein resides in the membrane. Functionally, high-affinity fructose transporter. This Schizosaccharomyces pombe (strain 972 / ATCC 24843) (Fission yeast) protein is High-affinity fructose transporter ght6 (ght6).